Consider the following 425-residue polypeptide: Serine--tRNA ligase (425 aa).

231-233 is an L-serine binding site; the sequence is TAE. ATP is bound at residue 262 to 264; the sequence is RSE. Glu285 is an L-serine binding site. 349–352 provides a ligand contact to ATP; sequence EISS. Ser385 is a binding site for L-serine.

Belongs to the class-II aminoacyl-tRNA synthetase family. Type-1 seryl-tRNA synthetase subfamily. Homodimer. The tRNA molecule binds across the dimer.

It localises to the cytoplasm. The enzyme catalyses tRNA(Ser) + L-serine + ATP = L-seryl-tRNA(Ser) + AMP + diphosphate + H(+). It carries out the reaction tRNA(Sec) + L-serine + ATP = L-seryl-tRNA(Sec) + AMP + diphosphate + H(+). The protein operates within aminoacyl-tRNA biosynthesis; selenocysteinyl-tRNA(Sec) biosynthesis; L-seryl-tRNA(Sec) from L-serine and tRNA(Sec): step 1/1. Catalyzes the attachment of serine to tRNA(Ser). Is also able to aminoacylate tRNA(Sec) with serine, to form the misacylated tRNA L-seryl-tRNA(Sec), which will be further converted into selenocysteinyl-tRNA(Sec). The sequence is that of Serine--tRNA ligase from Bartonella tribocorum (strain CIP 105476 / IBS 506).